The primary structure comprises 1860 residues: Probable helicase with zinc finger domain (1860 aa).

The C3H1-type zinc finger occupies 168–196 (SEEYTLCKRFLEQGLCRYGAQCTSAHSQE). 661-668 (GPYGTGKT) is an ATP binding site. The short motif at 787–790 (DEAA) is the DEAA box element. Disordered stretches follow at residues 1106-1136 (RSQH…TEPF), 1158-1177 (TPPG…VQRL), 1286-1317 (ERKA…GFPA), 1556-1604 (IQPR…PPDH), 1641-1709 (RQDP…RYPS), and 1749-1860 (MSEE…TYFK). The segment covering 1107–1116 (SQHPPQQGPG) has biased composition (low complexity). Basic and acidic residues predominate over residues 1286–1298 (ERKAPELKEKQGD). The span at 1301-1313 (SVQNKSPEPQSNM) shows a compositional bias: polar residues. Low complexity predominate over residues 1641-1660 (RQDPGPLQHQQQKQQLQAPQ). Pro residues-rich tracts occupy residues 1760–1769 (QPPPPPPPHP) and 1783–1794 (PLLPSKQTPPDP). A compositionally biased stretch (low complexity) spans 1847–1860 (GSSNSSNGYYTYFK).

It belongs to the DNA2/NAM7 helicase family.

It is found in the nucleus. In terms of biological role, may act as a helicase. The protein is Probable helicase with zinc finger domain (helz) of Danio rerio (Zebrafish).